A 213-amino-acid polypeptide reads, in one-letter code: Large ribosomal subunit protein uL1 (213 aa).

This sequence belongs to the universal ribosomal protein uL1 family.

The protein is Large ribosomal subunit protein uL1 (RPL10A) of Chlamydomonas reinhardtii (Chlamydomonas smithii).